Reading from the N-terminus, the 621-residue chain is Nuclear distribution protein nudE homolog 1 (621 aa).

Polar residues-rich tracts occupy residues 1–20 and 231–263; these read MPSADGSSSARPNGTSSRSD and RSPSTPQTPDLFNRSPASSIVSSPLFSTPTLKT. Disordered stretches follow at residues 1–21, 218–372, 389–537, and 569–621; these read MPSADGSSSARPNGTSSRSDQ, ELQN…PKSG, ERVQ…GVVN, and ISTP…GETY. A coiled-coil region spans residues 18–219; sequence RSDQLAWYKS…IHEKLRNAEL (202 aa). Composition is skewed to low complexity over residues 264–288 and 300–310; these read SLMSATATPPSPPISESSSSLRKSM and SASDSSFGSRS. Residues 323–341 show a composition bias toward polar residues; it reads SRATSYAFTSNRPTPSVTN. 3 stretches are compositionally biased toward low complexity: residues 353–362, 404–414, and 469–496; these read NENTNKHNNN, SPSRTSSRSGS, and SRPSSRTSYSSHSSVSHSTHPSVTPSTR. Positions 599–613 are enriched in basic and acidic residues; the sequence is DRLEGDMGPPERKSN.

Belongs to the nudE family. Self-associates. Interacts with nudF.

It is found in the cytoplasm. Its subcellular location is the cytoskeleton. Functionally, required for nuclear migration within hyphae during vegetative growth. The sequence is that of Nuclear distribution protein nudE homolog 1 (nde1) from Aspergillus fumigatus (strain ATCC MYA-4609 / CBS 101355 / FGSC A1100 / Af293) (Neosartorya fumigata).